We begin with the raw amino-acid sequence, 58 residues long: Putative antitoxin VapB16 (58 aa).

Putative antitoxin component of a possible type II toxin-antitoxin (TA) system. The cognate toxin is VapC16. The protein is Putative antitoxin VapB16 (vapB16) of Mycobacterium tuberculosis (strain ATCC 25618 / H37Rv).